The primary structure comprises 384 residues: L-cysteine:1D-myo-inositol 2-amino-2-deoxy-alpha-D-glucopyranoside ligase (384 aa).

Residue cysteine 16 participates in Zn(2+) binding. L-cysteinyl-5'-AMP is bound by residues 16 to 19 (CGIT), threonine 31, and 54 to 56 (NVT). Positions 18 to 28 (ITPYDATHLGH) match the 'HIGH' region motif. Residues 159-164 (ERGGDP) carry the 'ERGGDP' region motif. Tryptophan 199 lines the L-cysteinyl-5'-AMP pocket. Cysteine 203 provides a ligand contact to Zn(2+). L-cysteinyl-5'-AMP is bound at residue 221–223 (GSD). Histidine 228 lines the Zn(2+) pocket. Isoleucine 255 is a binding site for L-cysteinyl-5'-AMP. The 'KMSKS' region signature appears at 261 to 265 (KMSKS).

The protein belongs to the class-I aminoacyl-tRNA synthetase family. MshC subfamily. In terms of assembly, monomer. Zn(2+) is required as a cofactor.

It catalyses the reaction 1D-myo-inositol 2-amino-2-deoxy-alpha-D-glucopyranoside + L-cysteine + ATP = 1D-myo-inositol 2-(L-cysteinylamino)-2-deoxy-alpha-D-glucopyranoside + AMP + diphosphate + H(+). In terms of biological role, catalyzes the ATP-dependent condensation of GlcN-Ins and L-cysteine to form L-Cys-GlcN-Ins. This chain is L-cysteine:1D-myo-inositol 2-amino-2-deoxy-alpha-D-glucopyranoside ligase, found in Mycobacterium avium (strain 104).